The primary structure comprises 67 residues: MRVFKVTACVPSQTRIRTQRELQNTYFTKLVPYDNWFREQQRIMKMGGKIVKVELATGKPGTNTGLL.

One can recognise a CpcD-like domain in the interval M1–A56.

The protein belongs to the phycobilisome linker protein family.

It localises to the cellular thylakoid membrane. Rod linker protein, associated with allophycocyanin. Linker polypeptides determine the state of aggregation and the location of the disk-shaped phycobiliprotein units within the phycobilisome and modulate their spectroscopic properties in order to mediate a directed and optimal energy transfer. The chain is Phycobilisome 7.8 kDa linker polypeptide, allophycocyanin-associated, core (apcC) from Arthrospira platensis (Spirulina platensis).